A 260-amino-acid polypeptide reads, in one-letter code: Snake venom serine protease Dav-X (260 aa).

The signal sequence occupies residues 1-18; sequence MVLIRVLANLLILQLSYA. Positions 19 to 24 are excised as a propeptide; it reads QKSSEL. In terms of domain architecture, Peptidase S1 spans 25–251; sequence VIGGVECDIN…YTDWIQNIIA (227 aa). 6 disulfide bridges follow: Cys-31–Cys-165, Cys-52–Cys-68, Cys-102–Cys-258, Cys-144–Cys-212, Cys-176–Cys-191, and Cys-202–Cys-227. Catalysis depends on His-67, which acts as the Charge relay system. A glycan (N-linked (GlcNAc...) asparagine) is linked at Asn-81. Residue Asp-112 is the Charge relay system of the active site. 2 N-linked (GlcNAc...) asparagine glycosylation sites follow: Asn-124 and Asn-172. The active-site Charge relay system is Ser-206. Asn-241 is a glycosylation site (N-linked (GlcNAc...) asparagine).

Belongs to the peptidase S1 family. Snake venom subfamily. In terms of assembly, monomer. Expressed by the venom gland.

It localises to the secreted. Functionally, snake venom serine protease that may act in the hemostasis system of the prey. The polypeptide is Snake venom serine protease Dav-X (Deinagkistrodon acutus (Hundred-pace snake)).